Here is a 982-residue protein sequence, read N- to C-terminus: Protein phosphatase 1 regulatory subunit 12B (982 aa).

Basic and acidic residues predominate over residues 1-24; that stretch reads MAELEHLGGKRAESARMRRAEQLR. The disordered stretch occupies residues 1-50; sequence MAELEHLGGKRAESARMRRAEQLRRWRGSLTEQEPAERRGAGRQPLTRRG. The residue at position 29 (Ser29) is a Phosphoserine. ANK repeat units follow at residues 57 to 86, 90 to 119, 123 to 152, 216 to 245, and 249 to 278; these read EDGAVFLAACSSGDTDEVRKLLARGADINT, DGLTALHQACIDENLDMVKFLVENRANVNQ, EGWTPLHAAASCGYLNIAEYFINHGASVGI, SGATALHVAAAKGYSEVLRLLIQAGYELNV, and DGWTPLHAAAHWGVKEACSILAEALCDMDI. Disordered stretches follow at residues 342–517, 556–579, 606–864, and 918–948; these read EETP…RESA, RTPHKSQADTTAEKTADNVSSSTP, TDSS…EARE, and AQQKQEKTSDRSSVLEMEKRERRALERKMSE. Over residues 362–374 the composition is skewed to acidic residues; the sequence is SEEEEGEDEASES. Residues 375–385 show a composition bias toward basic and acidic residues; that stretch reads ETEKEADKKPE. Over residues 389–401 the composition is skewed to polar residues; the sequence is NHSNSESKSSITE. Residues 411 to 421 are compositionally biased toward low complexity; that stretch reads FSASSARRFSS. Position 445 is a phosphothreonine (Thr445). Low complexity predominate over residues 466 to 478; the sequence is SSIYRSSSSPRIS. The span at 482–491 shows a compositional bias: basic and acidic residues; that stretch reads DNKDKERENK. Over residues 623 to 632 the composition is skewed to basic and acidic residues; that stretch reads VRDEEAESLR. Residues 633–643 are compositionally biased toward basic residues; the sequence is KARSRQARQTR. At Thr646 the chain carries Phosphothreonine. Positions 656–680 are enriched in basic and acidic residues; it reads EAERTFSRSRAERQAQEQPREKPTD. Positions 731–742 are enriched in low complexity; it reads TTPASPSTSRPS. Polar residues predominate over residues 743-755; sequence LYTSSHLLWTNRF. Residues 797-807 are compositionally biased toward basic residues; the sequence is ERRRPKERRRG. Position 808 is a phosphothreonine (Thr808). Residues 824 to 836 are compositionally biased toward basic and acidic residues; sequence EEVKETWHERLSR. Ser839 bears the Phosphoserine mark. Residues 840–849 show a composition bias toward polar residues; that stretch reads GGSNPTTSDS. Composition is skewed to basic and acidic residues over residues 850 to 864, 918 to 927, and 933 to 948; these read YGDRASARARREARE, AQQKQEKTSD, and EMEKRERRALERKMSE. Ser947 bears the Phosphoserine mark.

PP1 comprises a catalytic subunit, PPP1CA, PPP1CB or PPP1CC, and one or several targeting or regulatory subunits. PPP1R12B mediates binding to myosin. Isoform 3 and isoform 4 bind PPP1R12A, but not isoform 1 of PPP1R12B itself. Binds IL16. In terms of tissue distribution, detected in skeletal muscle, fetal and adult heart, brain, placenta, kidney, spleen, thymus, pancreas and lung. Isoform 3 and isoform 4 are heart specific.

The protein resides in the cytoplasm. It localises to the cytoskeleton. Its subcellular location is the stress fiber. In terms of biological role, regulates myosin phosphatase activity. Augments Ca(2+) sensitivity of the contractile apparatus. This is Protein phosphatase 1 regulatory subunit 12B (PPP1R12B) from Homo sapiens (Human).